The sequence spans 297 residues: PsbP domain-containing protein 5, chloroplastic (297 aa).

This sequence belongs to the PsbP family.

The protein resides in the plastid. Its subcellular location is the chloroplast thylakoid lumen. In terms of biological role, involved in strigolactone biosynthesis. The sequence is that of PsbP domain-containing protein 5, chloroplastic (PPD5) from Arabidopsis thaliana (Mouse-ear cress).